Reading from the N-terminus, the 284-residue chain is Chaperone protein dnaJ 6 (284 aa).

Disordered stretches follow at residues 1–30 (MGRK…ETSL), 196–221 (NKIS…AKDS), and 252–284 (GGDA…SRGK). The Nuclear localization signal signature appears at 3-6 (RKKK). The region spanning 29–94 (SLYEVLGVER…EKRAVYDQTG (66 aa)) is the J domain. The Nuclear localization signal motif lies at 209–215 (RKRKKKK). A compositionally biased stretch (acidic residues) spans 255-265 (AEAEPTEEEFE). Basic and acidic residues predominate over residues 266 to 275 (AAQRRIESKR).

It belongs to the DnaJ family. C/III subfamily. As to expression, highly expressed in leaves, flowers and siliques, and to lower extent in roots.

The protein localises to the nucleus. Functionally, plays a continuous role in plant development probably in the structural organization of compartments. The sequence is that of Chaperone protein dnaJ 6 (ATJ6) from Arabidopsis thaliana (Mouse-ear cress).